A 63-amino-acid polypeptide reads, in one-letter code: Large ribosomal subunit protein bL35 (63 aa).

It belongs to the bacterial ribosomal protein bL35 family.

This chain is Large ribosomal subunit protein bL35, found in Campylobacter jejuni subsp. jejuni serotype O:2 (strain ATCC 700819 / NCTC 11168).